A 147-amino-acid polypeptide reads, in one-letter code: Hemoglobin subunit gamma-1 (147 aa).

The 145-residue stretch at 3 to 147 folds into the Globin domain; it reads NFTAEDKAAI…VASALGSRYH (145 aa). Phosphothreonine is present on Thr13. Phosphoserine is present on residues Ser45, Ser51, and Ser53. The residue at position 60 (Lys60) is an N6-acetyllysine. Residue His64 participates in heme b binding. Residue Lys83 is modified to N6-acetyllysine. A heme b-binding site is contributed by His93. Position 94 is an S-nitrosocysteine (Cys94). A Phosphoserine modification is found at Ser140.

This sequence belongs to the globin family. Heterotetramer of two alpha chains and two gamma chains in fetal hemoglobin (Hb F). In terms of tissue distribution, red blood cells.

Its function is as follows. Gamma chains make up the fetal hemoglobin F, in combination with alpha chains. This is Hemoglobin subunit gamma-1 (HBG1) from Plecturocebus moloch (Dusky titi monkey).